Reading from the N-terminus, the 66-residue chain is RTCLISPSSTSQTCPKGQDICFTKAFCDRWCSSRGPVIEQGCAATCPEFTSRYKSLLCCTTDNCNH.

5 disulfides stabilise this stretch: cysteine 3/cysteine 21, cysteine 14/cysteine 42, cysteine 27/cysteine 31, cysteine 46/cysteine 58, and cysteine 59/cysteine 64.

It belongs to the three-finger toxin family. Long-chain subfamily. Kappa-neurotoxin sub-subfamily. Homo- and heterodimer; non-covalently linked. As to expression, expressed by the venom gland.

The protein resides in the secreted. Postsynaptic neurotoxin that binds and inhibits neuronal nicotinic acetylcholine receptors (nAChR) with high affinity (IC(50)&lt;100 nM). Is a selective, and slowly reversible antagonist of alpha-3/CHRNA3-containing and some alpha-4/CHRNA4-containing AChRs. The protein is Kappa-flavitoxin of Bungarus flaviceps flaviceps (Red-headed krait).